We begin with the raw amino-acid sequence, 248 residues long: Ras-related protein RSR1 (248 aa).

GTP is bound at residue 10–17 (GAGGVGKS). The short motif at 32 to 40 (YDPTIEDSY) is the Effector region element. GTP-binding positions include 57–61 (DTAGV) and 116–119 (NKCD). The tract at residues 182–248 (LQKQQQQQQQ…SSGSKFCTII (67 aa)) is disordered. Over residues 184-214 (KQQQQQQQEQDAEGQQQQQKSGKSKSSATQK) the composition is skewed to low complexity. 2 stretches are compositionally biased toward polar residues: residues 219–231 (DGQT…LKQS) and 238–248 (SSSGSKFCTII). Residue C245 is modified to Cysteine methyl ester. A lipid anchor (S-geranylgeranyl cysteine) is attached at C245. Positions 246–248 (TII) are cleaved as a propeptide — removed in mature form.

Belongs to the small GTPase superfamily. Ras family.

The protein localises to the cell membrane. It catalyses the reaction GTP + H2O = GDP + phosphate + H(+). With respect to regulation, alternates between an inactive form bound to GDP and an active form bound to GTP. Activated by a guanine nucleotide-exchange factor (GEF) and inactivated by a GTPase-activating protein (GAP). Its function is as follows. Ras-related protein which binds GDP/GTP and possesses intrinsic GTPase activity. Involved in both yeast and hypha development. In the yeast phase, it is required for normal (polar) bud site selection and is involved in cell morphogenesis; in the yeast-mycelial transition it is involved in germ tube emergence; and in the development of the hyphae it is involved in cell elongation. The chain is Ras-related protein RSR1 (RSR1) from Candida albicans (Yeast).